The following is a 78-amino-acid chain: Large ribosomal subunit protein bL28 (78 aa).

Residues 1–21 form a disordered region; sequence MSRVCQVTGKRPVSGNNRSHA.

Belongs to the bacterial ribosomal protein bL28 family.

In Yersinia enterocolitica serotype O:8 / biotype 1B (strain NCTC 13174 / 8081), this protein is Large ribosomal subunit protein bL28.